Here is a 431-residue protein sequence, read N- to C-terminus: Adenylosuccinate synthetase (431 aa).

Residues 12–18 and 40–42 contribute to the GTP site; these read GDEGKGK and GHT. The active-site Proton acceptor is D13. The Mg(2+) site is built by D13 and G40. IMP contacts are provided by residues 13–16, 38–41, T130, R144, Q225, T240, and R304; these read DEGK and NAGH. The active-site Proton donor is H41. 300–306 lines the substrate pocket; that stretch reads STTGRPR. GTP contacts are provided by residues R306, 332-334, and 414-416; these read KMD and SIG.

This sequence belongs to the adenylosuccinate synthetase family. In terms of assembly, homodimer. It depends on Mg(2+) as a cofactor.

Its subcellular location is the cytoplasm. The enzyme catalyses IMP + L-aspartate + GTP = N(6)-(1,2-dicarboxyethyl)-AMP + GDP + phosphate + 2 H(+). It participates in purine metabolism; AMP biosynthesis via de novo pathway; AMP from IMP: step 1/2. Its function is as follows. Plays an important role in the de novo pathway of purine nucleotide biosynthesis. Catalyzes the first committed step in the biosynthesis of AMP from IMP. The chain is Adenylosuccinate synthetase from Syntrophotalea carbinolica (strain DSM 2380 / NBRC 103641 / GraBd1) (Pelobacter carbinolicus).